The primary structure comprises 485 residues: Glutamyl-tRNA(Gln) amidotransferase subunit A (485 aa).

Residues Lys78 and Ser153 each act as charge relay system in the active site. Residue Ser177 is the Acyl-ester intermediate of the active site.

It belongs to the amidase family. GatA subfamily. Heterotrimer of A, B and C subunits.

It carries out the reaction L-glutamyl-tRNA(Gln) + L-glutamine + ATP + H2O = L-glutaminyl-tRNA(Gln) + L-glutamate + ADP + phosphate + H(+). Functionally, allows the formation of correctly charged Gln-tRNA(Gln) through the transamidation of misacylated Glu-tRNA(Gln) in organisms which lack glutaminyl-tRNA synthetase. The reaction takes place in the presence of glutamine and ATP through an activated gamma-phospho-Glu-tRNA(Gln). This Syntrophus aciditrophicus (strain SB) protein is Glutamyl-tRNA(Gln) amidotransferase subunit A.